The following is a 37-amino-acid chain: Large ribosomal subunit protein bL36 (37 aa).

It belongs to the bacterial ribosomal protein bL36 family.

This chain is Large ribosomal subunit protein bL36, found in Symbiobacterium thermophilum (strain DSM 24528 / JCM 14929 / IAM 14863 / T).